Here is a 333-residue protein sequence, read N- to C-terminus: Glycerol-3-phosphate dehydrogenase [NAD(P)+] (333 aa).

Residues Ser-10, Trp-11, His-31, Arg-32, and Lys-105 each coordinate NADPH. Residues Lys-105, Gly-136, and Ser-138 each contribute to the sn-glycerol 3-phosphate site. Ala-140 provides a ligand contact to NADPH. Sn-glycerol 3-phosphate is bound by residues Lys-191, Asp-244, Ser-254, Arg-255, and Asn-256. Lys-191 functions as the Proton acceptor in the catalytic mechanism. Arg-255 is an NADPH binding site. NADPH is bound by residues Val-279 and Glu-281.

This sequence belongs to the NAD-dependent glycerol-3-phosphate dehydrogenase family.

It localises to the cytoplasm. It catalyses the reaction sn-glycerol 3-phosphate + NAD(+) = dihydroxyacetone phosphate + NADH + H(+). It carries out the reaction sn-glycerol 3-phosphate + NADP(+) = dihydroxyacetone phosphate + NADPH + H(+). The protein operates within membrane lipid metabolism; glycerophospholipid metabolism. In terms of biological role, catalyzes the reduction of the glycolytic intermediate dihydroxyacetone phosphate (DHAP) to sn-glycerol 3-phosphate (G3P), the key precursor for phospholipid synthesis. The polypeptide is Glycerol-3-phosphate dehydrogenase [NAD(P)+] (Chlorobium phaeobacteroides (strain DSM 266 / SMG 266 / 2430)).